Here is a 406-residue protein sequence, read N- to C-terminus: Vitamin D3 dihydroxylase (406 aa).

Over residues 1-15 the composition is skewed to low complexity; the sequence is MTDTATTPQTTDAPA. Residues 1–24 form a disordered region; sequence MTDTATTPQTTDAPAFPSNRSCPY. T81 contributes to the calciol binding site. Positions 103 and 107 each coordinate heme. Residues R193, S236, and I293 each contribute to the calciol site. Heme is bound by residues R297, H353, and C355.

The protein belongs to the cytochrome P450 family. It depends on heme as a cofactor.

Its subcellular location is the cytoplasm. It catalyses the reaction calciol + 2 reduced [2Fe-2S]-[ferredoxin] + O2 + 2 H(+) = calcidiol + 2 oxidized [2Fe-2S]-[ferredoxin] + H2O. The catalysed reaction is calcidiol + 2 reduced [2Fe-2S]-[ferredoxin] + O2 + 2 H(+) = calcitriol + 2 oxidized [2Fe-2S]-[ferredoxin] + H2O. Functionally, involved in the metabolism of vitamin D3 (calciol) and of a number of sulfonylurea herbicides. Catalyzes the two-step hydroxylation (25- and 1-alpha-hydroxylation) of vitamin D3 (VD3) to yield its active form 1-alpha,25-dihydroxyvitamin D3 (calcitriol). The first step is the hydroxylation of the C-25 position of VD3 to produce 25-hydroxyvitamin D3 (calcidiol). The second reaction is the hydroxylation of the C1-alpha-position of calcidiol to produce calcitriol. It can also hydroxylate vitamin D2. This is Vitamin D3 dihydroxylase from Streptomyces griseolus.